The chain runs to 187 residues: Probable nicotinate-nucleotide adenylyltransferase (187 aa).

The protein belongs to the NadD family.

The catalysed reaction is nicotinate beta-D-ribonucleotide + ATP + H(+) = deamido-NAD(+) + diphosphate. Its pathway is cofactor biosynthesis; NAD(+) biosynthesis; deamido-NAD(+) from nicotinate D-ribonucleotide: step 1/1. Functionally, catalyzes the reversible adenylation of nicotinate mononucleotide (NaMN) to nicotinic acid adenine dinucleotide (NaAD). This chain is Probable nicotinate-nucleotide adenylyltransferase, found in Anaeromyxobacter dehalogenans (strain 2CP-C).